Reading from the N-terminus, the 457-residue chain is Multidrug resistance protein NorM (457 aa).

A run of 12 helical transmembrane segments spans residues Phe-30–Ala-50, Ile-53–Ala-73, Ile-93–Ile-113, Thr-126–Leu-146, Ala-159–Tyr-179, Cys-192–Val-212, Phe-242–Val-262, Ala-276–Ile-296, Asn-315–Phe-335, Val-348–Ala-368, Phe-391–Leu-411, and Leu-416–Leu-436.

It belongs to the multi antimicrobial extrusion (MATE) (TC 2.A.66.1) family.

It localises to the cell inner membrane. Its function is as follows. Multidrug efflux pump that functions as a Na(+)/drug antiporter. Confers resistance to norfloxacin, ciprofloxacin, ofloxacin, daunomycin, doxorubicin, streptomycin, kanamycin, ethidium bromide and acriflavine. This Vibrio cholerae serotype O1 (strain ATCC 39315 / El Tor Inaba N16961) protein is Multidrug resistance protein NorM (norM).